Here is a 146-residue protein sequence, read N- to C-terminus: Large ribosomal subunit protein uL15 (146 aa).

Residues 1 to 51 are disordered; that stretch reads MKLHELQPAAGSRKVRNRVGRGTSSGNGKTSGRGQKGQKARSGGGVRLGFE. 2 stretches are compositionally biased toward gly residues: residues 23–35 and 42–51; these read TSSG…GRGQ and SGGGVRLGFE.

It belongs to the universal ribosomal protein uL15 family. In terms of assembly, part of the 50S ribosomal subunit.

In terms of biological role, binds to the 23S rRNA. The sequence is that of Large ribosomal subunit protein uL15 from Streptococcus sanguinis (strain SK36).